A 101-amino-acid polypeptide reads, in one-letter code: Small ribosomal subunit protein uS14 (101 aa).

It belongs to the universal ribosomal protein uS14 family. Part of the 30S ribosomal subunit. Contacts proteins S3 and S10.

Functionally, binds 16S rRNA, required for the assembly of 30S particles and may also be responsible for determining the conformation of the 16S rRNA at the A site. This chain is Small ribosomal subunit protein uS14, found in Baumannia cicadellinicola subsp. Homalodisca coagulata.